The sequence spans 82 residues: UPF0248 protein Mevan_1298 (82 aa).

This sequence belongs to the UPF0248 family.

The chain is UPF0248 protein Mevan_1298 from Methanococcus vannielii (strain ATCC 35089 / DSM 1224 / JCM 13029 / OCM 148 / SB).